The following is a 793-amino-acid chain: MPLPGGLWWLLCCRRGFTLLHRDYGDGELSGDGDEDEDEETFELRTPSPAGGGRGPLEVTLTQPVRSGPVSNRLQSWEETWSLIPEKGLPEDDPDIVVKGWLYREPRGGGARPWLPPRRAWFVLTRDSLDQFSSSGKGARRLGSLVLTSLCSVTGPERRRKETGLWSVTVSGRKHSVRLCSPRQAEAERWGVALREVIASKAPLETPTQLLLRDIQESCGDPEAVALIYLRNPILRHTSGALYAPLLPLPYGVSAPGPGYAPLREEAVRLFLALQALEGARRPGPLMQGVLQTCRDLPALRDELFLQLAKQTSGPAGPPGLPATQDPAALRYWQLLTCMSCTFRPGGAVRGHLLGHLERTEQALPDSELAEYARFIRKALGRTRGRELVPSLAEISALSQRQELLCTVHCPGAGACAVAIDSHTTAGEVARELVGRLGLARSRNAFALYEQRGAQERALAGGTLVADVLTRFENLAAEEAGLEDSPDSGWRLCLRLHGPLHPEGLSPDGHELPFLFEQAHALLLRGRPPPPDDTLRALAALRLQSLQRDFSPRVPLPRLDRLLPPPAPPREDPPRPTPRPPPSAALLAGALWSPGLAKRRAERARRGGAGRTAGSIAREGGGGAGTAAAVLGGWKRLRGMGRAEAMAAYLALAAQCPGFGAARYDVLELSTEPGRGAPQKLCLGLGAKAMSLSRPGETEPIHSVSYGHVAACQLMGPHTLALRVGESQLLLQSPQVEEIMQLVNAYLANPSPERPCSSSSPPCQDLPDTSPPSQRPGLDEPQGQSGCLGQLQD.

The signal sequence occupies residues 1–18; that stretch reads MPLPGGLWWLLCCRRGFT. The interval 28–62 is disordered; sequence ELSGDGDEDEDEETFELRTPSPAGGGRGPLEVTLT. Residues 29 to 41 are compositionally biased toward acidic residues; that stretch reads LSGDGDEDEDEET. Serine 30 carries the phosphoserine modification. The 105-residue stretch at 95–199 folds into the PH domain; sequence DIVVKGWLYR…WGVALREVIA (105 aa). One can recognise a MyTH4 domain in the interval 237 to 399; the sequence is HTSGALYAPL…PSLAEISALS (163 aa). The FERM domain occupies 404 to 754; that stretch reads LLCTVHCPGA…AYLANPSPER (351 aa). Disordered regions lie at residues 554–586 and 598–622; these read VPLPRLDRLLPPPAPPREDPPRPTPRPPPSAAL and KRRAERARRGGAGRTAGSIAREGGG. Residues 598–608 show a composition bias toward basic residues; the sequence is KRRAERARRGG. An omega-N-methylarginine mark is found at arginine 638 and arginine 642. Residues 750–762 show a composition bias toward low complexity; the sequence is PSPERPCSSSSPP. Positions 750–793 are disordered; sequence PSPERPCSSSSPPCQDLPDTSPPSQRPGLDEPQGQSGCLGQLQD. The span at 782–793 shows a compositional bias: polar residues; it reads QGQSGCLGQLQD.

This is Pleckstrin homology domain-containing family H member 3 (PLEKHH3) from Homo sapiens (Human).